The following is a 119-amino-acid chain: Large ribosomal subunit protein uL18 (119 aa).

The interval 1–24 (MITKQDKNQVRKKRHARVRSKISG) is disordered. Over residues 10–20 (VRKKRHARVRS) the composition is skewed to basic residues.

Belongs to the universal ribosomal protein uL18 family. In terms of assembly, part of the 50S ribosomal subunit; part of the 5S rRNA/L5/L18/L25 subcomplex. Contacts the 5S and 23S rRNAs.

This is one of the proteins that bind and probably mediate the attachment of the 5S RNA into the large ribosomal subunit, where it forms part of the central protuberance. This is Large ribosomal subunit protein uL18 from Lysinibacillus sphaericus (strain C3-41).